We begin with the raw amino-acid sequence, 85 residues long: Large ribosomal subunit protein bL27 (85 aa).

Residues 1-21 (MAHKKGASSSRNGRDSNAQRL) are disordered. Polar residues predominate over residues 7-19 (ASSSRNGRDSNAQ).

It belongs to the bacterial ribosomal protein bL27 family.

This Beutenbergia cavernae (strain ATCC BAA-8 / DSM 12333 / CCUG 43141 / JCM 11478 / NBRC 16432 / NCIMB 13614 / HKI 0122) protein is Large ribosomal subunit protein bL27.